The sequence spans 176 residues: RNA pyrophosphohydrolase (176 aa).

In terms of domain architecture, Nudix hydrolase spans 6–149 (GYRPNVGIVI…KRDVYRRVMK (144 aa)). The Nudix box motif lies at 38–59 (GGINPGESPEQAMYRELFEEVG).

This sequence belongs to the Nudix hydrolase family. RppH subfamily. A divalent metal cation is required as a cofactor.

In terms of biological role, accelerates the degradation of transcripts by removing pyrophosphate from the 5'-end of triphosphorylated RNA, leading to a more labile monophosphorylated state that can stimulate subsequent ribonuclease cleavage. The protein is RNA pyrophosphohydrolase of Proteus mirabilis (strain HI4320).